A 610-amino-acid chain; its full sequence is MANSGLWELITIGSAVRNVAKSYLKAEASSITAKQLYDASKITSSKRSTSDLHVQLLEKYRNGKVKHASQIKELGLSSKDTKRTLLGNSLDVQKDASGVKHLQEQSSKEIKNPISQPILPNKKDEISPAKPSAIDSSIKDVTKSHPATNANFTADFESSIEESYSTENKSPVILSSSKVPSSQWSRLWHYGGLATSLSVGAIGEKMKRMWGISKDDGALLLNERNVEILVNKLTQMRGAALKMGQMLSFQDSKLIDPRVSQILERVRDGAHSMPEKQLEQVMVKNLGKNWMTHYSEFDRKPMAAASIGQVHRARLASNHMEVVVKVQYPGVMSSIDSDLNNLAYLLKASRILPKGLFLENSLAAARKELKWECDYEREAAFAERFGSLLKNDSDFKVPMVFREASGPSVITLEYLHGIALGKQKYSQATRNHIGYLLTKQCLREISEYHFMQTDPNWSNFLYNGKTKKIELLDFGASIEYDEKFIKKYCRLLLAAAHRNREKCKKLSVELGYLNNHESAQMIDAHINSIFTLAEPFAFDAPDVYDFGDQTITARVKQQIPVMLDLRLQPPPEETYSLHRRLSGHFLLCAKLGAKVRCKELFSGMLKHYAD.

A compositionally biased stretch (basic and acidic residues) spans 98 to 111 (GVKHLQEQSSKEIK). A disordered region spans residues 98-144 (GVKHLQEQSSKEIKNPISQPILPNKKDEISPAKPSAIDSSIKDVTKS).

The protein belongs to the protein kinase superfamily. ADCK protein kinase family.

Its subcellular location is the mitochondrion. The protein operates within cofactor biosynthesis; ubiquinone biosynthesis. Atypical kinase involved in the biosynthesis of coenzyme Q, also named ubiquinone, an essential lipid-soluble electron transporter for aerobic cellular respiration. Its substrate specificity is still unclear: may act as a protein kinase that mediates phosphorylation of coq3. According to other reports, acts as a small molecule kinase, possibly a lipid kinase that phosphorylates a prenyl lipid in the ubiquinone biosynthesis pathway, as suggested by its ability to bind coenzyme Q lipid intermediates. This chain is Atypical kinase COQ8, mitochondrial, found in Schizosaccharomyces pombe (strain 972 / ATCC 24843) (Fission yeast).